A 212-amino-acid chain; its full sequence is Proteasome subunit beta type-2 (212 aa).

It belongs to the peptidase T1B family. In terms of assembly, the 26S proteasome consists of a 20S proteasome core and two 19S regulatory subunits. The 20S proteasome core is composed of 28 subunits that are arranged in four stacked rings, resulting in a barrel-shaped structure. The two end rings are each formed by seven alpha subunits, and the two central rings are each formed by seven beta subunits. The catalytic chamber with the active sites is on the inside of the barrel.

It localises to the cytoplasm. The protein resides in the nucleus. Functionally, non-catalytic component of the proteasome, a multicatalytic proteinase complex which is characterized by its ability to cleave peptides with Arg, Phe, Tyr, Leu, and Glu adjacent to the leaving group at neutral or slightly basic pH. The proteasome has an ATP-dependent proteolytic activity. In Oryza sativa subsp. japonica (Rice), this protein is Proteasome subunit beta type-2 (PBD1).